The chain runs to 78 residues: Defensin-like protein 74 (78 aa).

Residues 1-28 (MNYKIGIMSLLVITSIIFLFLVPDKVEA) form the signal peptide. 4 cysteine pairs are disulfide-bonded: C32–C73, C36–C58, C42–C71, and C46–C72.

This sequence belongs to the DEFL family.

Its subcellular location is the secreted. This Arabidopsis thaliana (Mouse-ear cress) protein is Defensin-like protein 74 (LCR43).